The sequence spans 207 residues: Large ribosomal subunit protein uL4 (207 aa).

The segment at 58-78 (AGGGKKPWRQKGTGRARHGSI) is disordered. Positions 63 to 77 (KPWRQKGTGRARHGS) are enriched in basic residues.

It belongs to the universal ribosomal protein uL4 family. In terms of assembly, part of the 50S ribosomal subunit.

Functionally, one of the primary rRNA binding proteins, this protein initially binds near the 5'-end of the 23S rRNA. It is important during the early stages of 50S assembly. It makes multiple contacts with different domains of the 23S rRNA in the assembled 50S subunit and ribosome. Its function is as follows. Forms part of the polypeptide exit tunnel. This chain is Large ribosomal subunit protein uL4, found in Aster yellows witches'-broom phytoplasma (strain AYWB).